A 394-amino-acid polypeptide reads, in one-letter code: Elongation factor Tu (394 aa).

Residues 10–204 enclose the tr-type G domain; the sequence is KPHINVGTIG…FLDSYIPEPK (195 aa). The interval 19–26 is G1; it reads GHVDHGKT. 19–26 serves as a coordination point for GTP; sequence GHVDHGKT. T26 is a Mg(2+) binding site. Residues 60–64 are G2; it reads GITIN. Residues 81–84 are G3; that stretch reads DCPG. Residues 81-85 and 136-139 each bind GTP; these read DCPGH and NKCD. A G4 region spans residues 136–139; the sequence is NKCD. Positions 174–176 are G5; sequence SAL.

The protein belongs to the TRAFAC class translation factor GTPase superfamily. Classic translation factor GTPase family. EF-Tu/EF-1A subfamily. Monomer.

The protein localises to the cytoplasm. It carries out the reaction GTP + H2O = GDP + phosphate + H(+). Functionally, GTP hydrolase that promotes the GTP-dependent binding of aminoacyl-tRNA to the A-site of ribosomes during protein biosynthesis. This chain is Elongation factor Tu, found in Buchnera aphidicola subsp. Acyrthosiphon pisum (strain 5A).